The following is a 343-amino-acid chain: MKVSIIGATGYGGLELIRLLHQHASVDIATLHSFSAQSETLATFYPHLKDLEASPLEKINSAEIIEKSDTVFIATPSGIAKDIALPYVDAGLNVIDLSGDFRLKDRQLYEKWYGKSAAPIEYIAKAEYGLAEFRDKKEARFIANPGCYATATLLGIAPLVKSQLIDPTSIIVDAKSGISGAGKVPSASTHFTETNENMTLYKMNSHQHIPEIMQQLTKWDETIPAIQFSTSLIPITRGIFTTIYVKPKNPITQKELHTLYKSTYENAPFVRIQPENVYPTVKQVTASNYCDIGLAYNEKTNVITIVSVLDNLVKGAAGQAIQNLNIMANFAESDGLRFIPVYP.

The active site involves C147.

The protein belongs to the NAGSA dehydrogenase family. Type 1 subfamily.

Its subcellular location is the cytoplasm. The enzyme catalyses N-acetyl-L-glutamate 5-semialdehyde + phosphate + NADP(+) = N-acetyl-L-glutamyl 5-phosphate + NADPH + H(+). Its pathway is amino-acid biosynthesis; L-arginine biosynthesis; N(2)-acetyl-L-ornithine from L-glutamate: step 3/4. Functionally, catalyzes the NADPH-dependent reduction of N-acetyl-5-glutamyl phosphate to yield N-acetyl-L-glutamate 5-semialdehyde. The protein is N-acetyl-gamma-glutamyl-phosphate reductase of Listeria monocytogenes serotype 4b (strain CLIP80459).